The sequence spans 341 residues: Thiamine-phosphate synthase (341 aa).

Residues Met1–Arg123 are unknown. The tract at residues Ala61–Val80 is disordered. A thiamine-phosphate synthase region spans residues Val124 to Gly341. 4-amino-2-methyl-5-(diphosphooxymethyl)pyrimidine is bound by residues Gln171–Lys175 and Asn203. 2 residues coordinate Mg(2+): Asp204 and Asp223. Ser242 serves as a coordination point for 4-amino-2-methyl-5-(diphosphooxymethyl)pyrimidine. Residue Thr268–Thr270 coordinates 2-[(2R,5Z)-2-carboxy-4-methylthiazol-5(2H)-ylidene]ethyl phosphate. Lys271 serves as a coordination point for 4-amino-2-methyl-5-(diphosphooxymethyl)pyrimidine. 2-[(2R,5Z)-2-carboxy-4-methylthiazol-5(2H)-ylidene]ethyl phosphate is bound at residue Gly298.

It belongs to the thiamine-phosphate synthase family. Requires Mg(2+) as cofactor.

The enzyme catalyses 2-[(2R,5Z)-2-carboxy-4-methylthiazol-5(2H)-ylidene]ethyl phosphate + 4-amino-2-methyl-5-(diphosphooxymethyl)pyrimidine + 2 H(+) = thiamine phosphate + CO2 + diphosphate. The catalysed reaction is 2-(2-carboxy-4-methylthiazol-5-yl)ethyl phosphate + 4-amino-2-methyl-5-(diphosphooxymethyl)pyrimidine + 2 H(+) = thiamine phosphate + CO2 + diphosphate. It catalyses the reaction 4-methyl-5-(2-phosphooxyethyl)-thiazole + 4-amino-2-methyl-5-(diphosphooxymethyl)pyrimidine + H(+) = thiamine phosphate + diphosphate. It functions in the pathway cofactor biosynthesis; thiamine diphosphate biosynthesis; thiamine phosphate from 4-amino-2-methyl-5-diphosphomethylpyrimidine and 4-methyl-5-(2-phosphoethyl)-thiazole: step 1/1. Condenses 4-methyl-5-(beta-hydroxyethyl)thiazole monophosphate (THZ-P) and 2-methyl-4-amino-5-hydroxymethyl pyrimidine pyrophosphate (HMP-PP) to form thiamine monophosphate (TMP). The sequence is that of Thiamine-phosphate synthase from Gloeobacter violaceus (strain ATCC 29082 / PCC 7421).